The following is a 276-amino-acid chain: NADPH-dependent 7-cyano-7-deazaguanine reductase (276 aa).

83–85 (IES) provides a ligand contact to substrate. Position 85–86 (85–86 (SK)) interacts with NADPH. Cysteine 184 (thioimide intermediate) is an active-site residue. The active-site Proton donor is the aspartate 191. 223–224 (HE) is a substrate binding site. 252-253 (RG) provides a ligand contact to NADPH.

It belongs to the GTP cyclohydrolase I family. QueF type 2 subfamily. As to quaternary structure, homodimer.

The protein resides in the cytoplasm. The catalysed reaction is 7-aminomethyl-7-carbaguanine + 2 NADP(+) = 7-cyano-7-deazaguanine + 2 NADPH + 3 H(+). It functions in the pathway tRNA modification; tRNA-queuosine biosynthesis. Its function is as follows. Catalyzes the NADPH-dependent reduction of 7-cyano-7-deazaguanine (preQ0) to 7-aminomethyl-7-deazaguanine (preQ1). This chain is NADPH-dependent 7-cyano-7-deazaguanine reductase, found in Ectopseudomonas mendocina (strain ymp) (Pseudomonas mendocina).